Consider the following 474-residue polypeptide: MAKQQEAELIFIPFPIPGHILATIELAKRLISHQPSRIHTITILHWSLPFLPQSDTIAFLKSLIETESRIRLITLPDVQNPPPMELFVKASESYILEYVKKMVPLVRNALSTLLSSRDESDSVHVAGLVLDFFCVPLIDVGNEFNLPSYIFLTCSASFLGMMKYLLERNRETKPELNRSSDEETISVPGFVNSVPVKVLPPGLFTTESYEAWVEMAERFPEAKGILVNSFESLERNAFDYFDRRPDNYPPVYPIGPILCSNDRPNLDLSERDRILKWLDDQPESSVVFLCFGSLKSLAASQIKEIAQALELVGIRFLWSIRTDPKEYASPNEILPDGFMNRVMGLGLVCGWAPQVEILAHKAIGGFVSHCGWNSILESLRFGVPIATWPMYAEQQLNAFTIVKELGLALEMRLDYVSEYGEIVKADEIAGAVRSLMDGEDVPRRKLKEIAEAGKEAVMDGGSSFVAVKRFIDGL.

UDP-alpha-D-glucose is bound by residues S293, 352 to 354 (APQ), 369 to 377 (HCGWNSILE), and 391 to 394 (YAEQ).

This sequence belongs to the UDP-glycosyltransferase family.

Functionally, possesses low quercetin 3-O-glucosyltransferase, 7-O-glucosyltransferase and 3'-O-glucosyltransferase activities in vitro. Glucosylates other secondary metabolites in vitro like vanillin, trans-resveratrol, curumin and etoposide. The sequence is that of UDP-glycosyltransferase 71C2 (UGT71C2) from Arabidopsis thaliana (Mouse-ear cress).